Here is an 852-residue protein sequence, read N- to C-terminus: Zinc finger and SCAN domain-containing protein 29 (852 aa).

Residues 18–100 (RQRFRRFHYQ…TLVEDLEREP (83 aa)) enclose the SCAN box domain. Disordered stretches follow at residues 96–182 (LERE…PKSG), 347–400 (ASHS…SAAP), and 502–557 (PNDG…RAPV). K112 is covalently cross-linked (Glycyl lysine isopeptide (Lys-Gly) (interchain with G-Cter in SUMO2)). S153 carries the phosphoserine modification. K180 participates in a covalent cross-link: Glycyl lysine isopeptide (Lys-Gly) (interchain with G-Cter in SUMO2). The segment covering 508-517 (ETASCPVQGT) has biased composition (polar residues). Over residues 528–545 (EADEATEEDSDDDEEDTE) the composition is skewed to acidic residues. S561 carries the post-translational modification Phosphoserine. K576 participates in a covalent cross-link: Glycyl lysine isopeptide (Lys-Gly) (interchain with G-Cter in SUMO2). Positions 603–625 (QGKGNESDCRSGRQWAKTSGEKR) are disordered. K652 is covalently cross-linked (Glycyl lysine isopeptide (Lys-Gly) (interchain with G-Cter in SUMO2)). C2H2-type zinc fingers lie at residues 678-700 (YKCA…RRIH), 706-728 (YKCL…RRIH), 734-756 (YQCG…QRTH), 762-784 (YQCE…RRIH), 790-812 (HVCP…HRTH), and 818-840 (YGCH…GEIH).

It belongs to the krueppel C2H2-type zinc-finger protein family.

The protein localises to the nucleus. In terms of biological role, may be involved in transcriptional regulation. The chain is Zinc finger and SCAN domain-containing protein 29 (ZSCAN29) from Homo sapiens (Human).